A 406-amino-acid polypeptide reads, in one-letter code: (R)-benzylsuccinyl-CoA dehydrogenase (406 aa).

This sequence belongs to the acyl-CoA dehydrogenase family. In terms of assembly, homotetramer. FAD is required as a cofactor.

The enzyme catalyses (R)-2-benzylsuccinyl-CoA + oxidized [electron-transfer flavoprotein] + H(+) = (E)-2-benzylidenesuccinyl-CoA + reduced [electron-transfer flavoprotein]. Its pathway is xenobiotic degradation; toluene degradation. Inhibited by (S)-benzylsuccinyl-CoA. Functionally, catalyzes the oxidation of benzylsuccinyl-CoA to benzylidenesuccinyl-CoA. This is (R)-benzylsuccinyl-CoA dehydrogenase (bbsG) from Thauera aromatica.